The primary structure comprises 115 residues: uncharacterized protein (115 aa).

A run of 3 helical transmembrane segments spans residues 7–27 (TLIF…IWFD), 40–60 (YALT…LLAA), and 72–92 (IVLV…YFYL).

It is found in the cell membrane. This is an uncharacterized protein from Haemophilus influenzae (strain ATCC 51907 / DSM 11121 / KW20 / Rd).